Reading from the N-terminus, the 119-residue chain is Large ribosomal subunit protein bL17 (119 aa).

The protein belongs to the bacterial ribosomal protein bL17 family. Part of the 50S ribosomal subunit. Contacts protein L32.

The polypeptide is Large ribosomal subunit protein bL17 (Ureaplasma parvum serovar 3 (strain ATCC 27815 / 27 / NCTC 11736)).